The primary structure comprises 617 residues: MAFLQISEPGQSAAPHQHKLAVGIDLGTTNSLVASVRSGEANTLPDMKGNVILPSVVQYQDDKICVGANAYQSAASDPQNTIISVKRLMGRSLKDIQTRYPDLPYQFTESDNGLPVIHTTQGDVNPIQVSAEILKSLSNRAEVTLGGSLEGVVITVPAYFDDAQRAGTKDAATLAGLNVLRLLNEPTAAAIAYGLDSGQEGIIAVYDLGGGTFDISILRLSKGVFEVLATGGDSALGGDDFDHVLSQWIKDQAEITTALSNQEQRELLTLATETKVALSDADSVTVSFKEWSGTITADIFNQLIQSLVKKTLMACRRALKDADISSEDVMEVVMVGGSTRTPIVRRSVGDYFAKTPLTSIDPDQVVAIGAAIQADILVGNKPDTEMLLLDVIPLSLGIETMGGLVEKIIPRNTTIPVAKAQEFTTFKDGQTGMMVHVVQGEREMVEDGRSLARFSLKGIPPMTAGAAHIRVTYQVDADGLLSVTAMEKSTGVQSHIQVKPSYGLSDNEVATMLKDSMTYAKDDMKARALAEQQVEADRVIEGLVVALNNDGDALLSKEEQTVILQAVEALITVRKGTDTQAIEDGIKHADEASQEFAARRMDASIRAALAGQSIDEV.

It belongs to the heat shock protein 70 family.

In terms of biological role, chaperone involved in the maturation of iron-sulfur cluster-containing proteins. Has a low intrinsic ATPase activity which is markedly stimulated by HscB. The polypeptide is Chaperone protein HscA homolog (Aliivibrio salmonicida (strain LFI1238) (Vibrio salmonicida (strain LFI1238))).